An 83-amino-acid chain; its full sequence is NAD(P)H-quinone oxidoreductase subunit L (83 aa).

Transmembrane regions (helical) follow at residues 18 to 38 and 53 to 73; these read IGGYVALGGLYLVVMPLLLFF and FSVYGLVFFFFPGMIVFAPFL.

It belongs to the complex I NdhL subunit family. As to quaternary structure, NDH-1 can be composed of about 15 different subunits; different subcomplexes with different compositions have been identified which probably have different functions.

It is found in the cellular thylakoid membrane. It carries out the reaction a plastoquinone + NADH + (n+1) H(+)(in) = a plastoquinol + NAD(+) + n H(+)(out). The enzyme catalyses a plastoquinone + NADPH + (n+1) H(+)(in) = a plastoquinol + NADP(+) + n H(+)(out). NDH-1 shuttles electrons from an unknown electron donor, via FMN and iron-sulfur (Fe-S) centers, to quinones in the respiratory and/or the photosynthetic chain. The immediate electron acceptor for the enzyme in this species is believed to be plastoquinone. Couples the redox reaction to proton translocation, and thus conserves the redox energy in a proton gradient. Cyanobacterial NDH-1 also plays a role in inorganic carbon-concentration. The polypeptide is NAD(P)H-quinone oxidoreductase subunit L (Synechococcus sp. (strain CC9311)).